A 363-amino-acid chain; its full sequence is Chorismate synthase (363 aa).

Arg48 serves as a coordination point for NADP(+). Residues Arg125 to Ser127, Asn238 to Ala239, Gly278, Lys293 to Ser297, and Arg319 each bind FMN.

Belongs to the chorismate synthase family. In terms of assembly, homotetramer. Requires FMNH2 as cofactor.

The catalysed reaction is 5-O-(1-carboxyvinyl)-3-phosphoshikimate = chorismate + phosphate. The protein operates within metabolic intermediate biosynthesis; chorismate biosynthesis; chorismate from D-erythrose 4-phosphate and phosphoenolpyruvate: step 7/7. Catalyzes the anti-1,4-elimination of the C-3 phosphate and the C-6 proR hydrogen from 5-enolpyruvylshikimate-3-phosphate (EPSP) to yield chorismate, which is the branch point compound that serves as the starting substrate for the three terminal pathways of aromatic amino acid biosynthesis. This reaction introduces a second double bond into the aromatic ring system. This Acinetobacter baylyi (strain ATCC 33305 / BD413 / ADP1) protein is Chorismate synthase.